Here is a 624-residue protein sequence, read N- to C-terminus: uncharacterized protein (624 aa).

The tract at residues 113–249 (SINVRTSATT…RFHPVTDINK (137 aa)) is disordered. The span at 118–225 (TSATTTESTN…ATTTESTNAS (108 aa)) shows a compositional bias: low complexity. The segment covering 226–249 (AKEDANKDGNAEDNRFHPVTDINK) has biased composition (basic and acidic residues).

This is an uncharacterized protein from Saccharomyces cerevisiae (strain ATCC 204508 / S288c) (Baker's yeast).